We begin with the raw amino-acid sequence, 156 residues long: ATP synthase subunit b 2 (156 aa).

The helical transmembrane segment at 6 to 26 (SMFGQAISFVIFVWLCMKYVW) threads the bilayer.

Belongs to the ATPase B chain family. As to quaternary structure, F-type ATPases have 2 components, F(1) - the catalytic core - and F(0) - the membrane proton channel. F(1) has five subunits: alpha(3), beta(3), gamma(1), delta(1), epsilon(1). F(0) has three main subunits: a(1), b(2) and c(10-14). The alpha and beta chains form an alternating ring which encloses part of the gamma chain. F(1) is attached to F(0) by a central stalk formed by the gamma and epsilon chains, while a peripheral stalk is formed by the delta and b chains.

The protein resides in the cell inner membrane. F(1)F(0) ATP synthase produces ATP from ADP in the presence of a proton or sodium gradient. F-type ATPases consist of two structural domains, F(1) containing the extramembraneous catalytic core and F(0) containing the membrane proton channel, linked together by a central stalk and a peripheral stalk. During catalysis, ATP synthesis in the catalytic domain of F(1) is coupled via a rotary mechanism of the central stalk subunits to proton translocation. In terms of biological role, component of the F(0) channel, it forms part of the peripheral stalk, linking F(1) to F(0). In Vibrio campbellii (strain ATCC BAA-1116), this protein is ATP synthase subunit b 2.